Here is a 271-residue protein sequence, read N- to C-terminus: 3-methyl-2-oxobutanoate hydroxymethyltransferase (271 aa).

2 residues coordinate Mg(2+): Asp50 and Asp89. Residues 50 to 51 (DS), Asp89, and Lys118 contribute to the 3-methyl-2-oxobutanoate site. Glu120 lines the Mg(2+) pocket. Glu187 (proton acceptor) is an active-site residue.

The protein belongs to the PanB family. Homodecamer; pentamer of dimers. It depends on Mg(2+) as a cofactor.

It localises to the cytoplasm. It catalyses the reaction 3-methyl-2-oxobutanoate + (6R)-5,10-methylene-5,6,7,8-tetrahydrofolate + H2O = 2-dehydropantoate + (6S)-5,6,7,8-tetrahydrofolate. It participates in cofactor biosynthesis; (R)-pantothenate biosynthesis; (R)-pantoate from 3-methyl-2-oxobutanoate: step 1/2. Functionally, catalyzes the reversible reaction in which hydroxymethyl group from 5,10-methylenetetrahydrofolate is transferred onto alpha-ketoisovalerate to form ketopantoate. This chain is 3-methyl-2-oxobutanoate hydroxymethyltransferase, found in Campylobacter concisus (strain 13826).